The sequence spans 990 residues: Sister chromatid cohesion protein PDS5 homolog E (990 aa).

HEAT repeat units follow at residues 31–57 (DATL…SVQK), 58–96 (ALHP…ITAP), 153–190 (DLVL…DESE), 191–228 (EVPM…SCTC), and 232–269 (PCIM…HNDV). The tract at residues 262 to 565 (TTQAHNDVKP…AGEEVESNTN (304 aa)) is disordered. The segment covering 267–281 (NDVKPKDNEADEKIS) has biased composition (basic and acidic residues). Basic residues predominate over residues 302-314 (KGTRSKRSARGGT). Composition is skewed to polar residues over residues 328 to 342 (EGLS…ASGS) and 394 to 410 (VGQT…SSGR). Basic and acidic residues-rich tracts occupy residues 421–430 (TKMEETDHDV), 448–477 (PAKE…EKAD), and 503–512 (VHSDAKKKNS). A Nuclear localization signal 1 motif is present at residues 458 to 465 (VKKHEDGI). Short sequence motifs (nuclear localization signal) lie at residues 539-546 (TKKSEQAP) and 583-590 (DKKFYEGV). The interval 653 to 966 (KKRKIVSKNV…VGNEAEEDDQ (314 aa)) is disordered. A compositionally biased stretch (low complexity) spans 662-673 (VEPSSSPEVRSS). Short sequence motifs (nuclear localization signal) lie at residues 677–684 (MKKKDSVT) and 715–722 (LKKLNGEP). The segment covering 727 to 742 (GRTGKKQKVTQAMHRK) has biased composition (basic residues). The span at 746 to 760 (DCDEQEDLETKDEED) shows a compositional bias: acidic residues. Composition is skewed to basic and acidic residues over residues 761–810 (SLKL…KTNG), 819–890 (TDGK…KETN), and 898–947 (EEQK…DKET).

Belongs to the PDS5 family. Interacts with the cohesin complex.

It localises to the nucleus. In terms of biological role, cohesin cofactor dispensable during the meiotic division but playing an important role in DNA repair by homologous recombination (HR) probably by helping SMC5/SMC6 complex. Regulator of sister chromatid cohesion in mitosis which may stabilize cohesin complex association with chromatin. May couple sister chromatid cohesion during mitosis to DNA replication. Cohesion ensures that chromosome partitioning is accurate in both meiotic and mitotic cells and plays an important role in DNA repair. In Arabidopsis thaliana (Mouse-ear cress), this protein is Sister chromatid cohesion protein PDS5 homolog E.